The chain runs to 535 residues: Beta-hexosaminidase 3 (535 aa).

Residues Met-1 to Ser-24 form the signal peptide. Asn-92 carries N-linked (GlcNAc...) asparagine glycosylation. A disulfide bridge connects residues Cys-292 and Cys-334. The active-site Proton donor is Glu-329. Residues Asn-331, Asn-405, Asn-441, and Asn-496 are each glycosylated (N-linked (GlcNAc...) asparagine). A disulfide bridge links Cys-506 with Cys-532.

The protein belongs to the glycosyl hydrolase 20 family. N-glycosylated. As to expression, expressed in roots, leaves, stems, flowers and siliques.

Its subcellular location is the cell membrane. It catalyses the reaction Hydrolysis of terminal non-reducing N-acetyl-D-hexosamine residues in N-acetyl-beta-D-hexosaminides.. Its activity is regulated as follows. Slightly inhibited by N-acetylcastanospermine. In terms of biological role, has a broad substrate specificity. Can use synthetic substrates such as pyridylaminated chitotriose, p-nitrophenyl-beta-N-acetylglucosaminide, p-nitrophenyl-2-acetamido-2-deoxy-beta-D-glucopyranoside (pNP-GlcNAc), p-nitrophenyl-2-acetamido-2-deoxy-beta-D-galactopyranoside (pNP-GalNAc), 4-methylumbelliferyl-2-acetamido-2-deoxy-beta-D-glucopyranoside (MU-GlcNAc), and 4-methylumbelliferyl-6-sulfo-2-acetamido-2-deoxy-beta-D-glucopyranoside (MU-GlcNAc-6SO(4)) as substrates. Removes terminal GlcNAc residues from alpha1,3- and alpha1,6-mannosyl branches of biantennary N-glycans without any strict branch preference. Required for the presence of paucimannosidic N-glycans in glycoproteins of roots and leaves. The protein is Beta-hexosaminidase 3 (HEXO3) of Arabidopsis thaliana (Mouse-ear cress).